The chain runs to 239 residues: Ribonuclease HII (239 aa).

The RNase H type-2 domain maps to 18–231; that stretch reads KIIVGLDEAG…SKNLLKEIEE (214 aa). Residues Asp24, Glu25, and Asp125 each contribute to the a divalent metal cation site.

It belongs to the RNase HII family. Mn(2+) is required as a cofactor. It depends on Mg(2+) as a cofactor.

It localises to the cytoplasm. The catalysed reaction is Endonucleolytic cleavage to 5'-phosphomonoester.. Functionally, endonuclease that specifically degrades the RNA of RNA-DNA hybrids. The chain is Ribonuclease HII from Methanococcus maripaludis (strain C6 / ATCC BAA-1332).